Consider the following 343-residue polypeptide: Cathepsin Q (343 aa).

An N-terminal signal peptide occupies residues 1-20 (MTPAVFLVILCLGVVPGASA). The propeptide at 21–124 (LDLSLDVQWQ…FPNSWNWRDA (104 aa)) is activation peptide. 2 disulfides stabilise this stretch: Cys-146-Cys-189 and Cys-180-Cys-222. Cys-149 is a catalytic residue. Asn-228 carries N-linked (GlcNAc...) asparagine glycosylation. Cys-280 and Cys-332 are oxidised to a cystine. The active site involves His-286. The N-linked (GlcNAc...) asparagine glycan is linked to Asn-298. The active site involves Asn-310.

Belongs to the peptidase C1 family. As to expression, highly expressed in placenta.

It is found in the lysosome. In Rattus norvegicus (Rat), this protein is Cathepsin Q (Ctsq).